The chain runs to 287 residues: Protease HtpX (287 aa).

Transmembrane regions (helical) follow at residues 4–24 (IFLLIATNLAVLLVASIVMSI) and 33–53 (GGLLVFAAIFGFGGAFISLAI). Residue histidine 139 participates in Zn(2+) binding. The active site involves glutamate 140. Histidine 143 contributes to the Zn(2+) binding site. The next 2 helical transmembrane spans lie at 154–174 (LIQGVVNTFVIFAARVVAGII) and 195–215 (AVVFVLDMLFGILASIIVAYF). Glutamate 220 provides a ligand contact to Zn(2+).

It belongs to the peptidase M48B family. Zn(2+) is required as a cofactor.

Its subcellular location is the cell inner membrane. This Shewanella sp. (strain ANA-3) protein is Protease HtpX.